The primary structure comprises 510 residues: Cytochrome P450 90D2 (510 aa).

The helical transmembrane segment at 6–26 (MVGSGGVYSWPAALLVAAIVV) threads the bilayer. Cys444 serves as a coordination point for heme.

It belongs to the cytochrome P450 family. Heme is required as a cofactor.

Its subcellular location is the membrane. The catalysed reaction is 3-epi-6-deoxocathasterone + reduced [NADPH--hemoprotein reductase] + O2 = 6-deoxotyphasterol + oxidized [NADPH--hemoprotein reductase] + H2O + H(+). The enzyme catalyses (22S,24R)-22-hydroxy-5alpha-ergostan-3-one + reduced [NADPH--hemoprotein reductase] + O2 = 3-dehydro-6-deoxoteasterone + oxidized [NADPH--hemoprotein reductase] + H2O + H(+). It catalyses the reaction 6-deoxycathasterone + reduced [NADPH--hemoprotein reductase] + O2 = 6-deoxoteasterone + oxidized [NADPH--hemoprotein reductase] + H2O + H(+). It participates in plant hormone biosynthesis; brassinosteroid biosynthesis. Involved in reduction steps of the biosynthesis of plant campesterol-derivative steroids, ending to castasterone (CS) but missing brassinolide (BL). Catalyzes the conversion of (22S,24R)-22-hydroxy-5alpha-ergostan-3-one (22-hydroxy-campesta-3-one, 22-OH-3-one) to 3-dehydro-6-deoxoteasterone (6-deoxo3DT, 6-deoxo-3-DHT), 3-epi-6-deoxocathasterone (3-epi-6-deoxoCT) to 6-deoxotyphasterol (6-deoxoTY) and of 6-deoxocathasterone (6-deoxoCT) to 6-deoxoteasterone (6-deoxoTE). This chain is Cytochrome P450 90D2, found in Brachypodium distachyon (Purple false brome).